A 146-amino-acid chain; its full sequence is ATP synthase epsilon chain (146 aa).

The protein belongs to the ATPase epsilon chain family. F-type ATPases have 2 components, CF(1) - the catalytic core - and CF(0) - the membrane proton channel. CF(1) has five subunits: alpha(3), beta(3), gamma(1), delta(1), epsilon(1). CF(0) has three main subunits: a, b and c.

It is found in the cell membrane. Its function is as follows. Produces ATP from ADP in the presence of a proton gradient across the membrane. In Lactobacillus helveticus (strain DPC 4571), this protein is ATP synthase epsilon chain.